A 406-amino-acid polypeptide reads, in one-letter code: Probable tRNA pseudouridine synthase D (406 aa).

The active-site Nucleophile is aspartate 77. In terms of domain architecture, TRUD spans 150–371; the sequence is GFPNYFGIQR…PGGRRELLIK (222 aa).

This sequence belongs to the pseudouridine synthase TruD family.

It carries out the reaction uridine(13) in tRNA = pseudouridine(13) in tRNA. Its function is as follows. Could be responsible for synthesis of pseudouridine from uracil-13 in transfer RNAs. The polypeptide is Probable tRNA pseudouridine synthase D (Pyrococcus abyssi (strain GE5 / Orsay)).